The chain runs to 185 residues: Photosystem I assembly protein Ycf4 (185 aa).

The next 2 helical transmembrane spans lie at 24–44 (YIIG…SISS) and 66–86 (IIMG…WYLV).

The protein belongs to the Ycf4 family.

The protein resides in the cellular thylakoid membrane. In terms of biological role, seems to be required for the assembly of the photosystem I complex. This Prochlorococcus marinus (strain AS9601) protein is Photosystem I assembly protein Ycf4.